An 80-amino-acid polypeptide reads, in one-letter code: uncharacterized protein (80 aa).

This is an uncharacterized protein from Schizosaccharomyces pombe (strain 972 / ATCC 24843) (Fission yeast).